Here is a 148-residue protein sequence, read N- to C-terminus: Large ribosomal subunit protein uL13 (148 aa).

Belongs to the universal ribosomal protein uL13 family. Part of the 50S ribosomal subunit.

In terms of biological role, this protein is one of the early assembly proteins of the 50S ribosomal subunit, although it is not seen to bind rRNA by itself. It is important during the early stages of 50S assembly. The sequence is that of Large ribosomal subunit protein uL13 from Lacticaseibacillus casei (strain BL23) (Lactobacillus casei).